Consider the following 66-residue polypeptide: Large ribosomal subunit protein uL29 (66 aa).

It belongs to the universal ribosomal protein uL29 family.

This chain is Large ribosomal subunit protein uL29, found in Caldanaerobacter subterraneus subsp. tengcongensis (strain DSM 15242 / JCM 11007 / NBRC 100824 / MB4) (Thermoanaerobacter tengcongensis).